Here is a 158-residue protein sequence, read N- to C-terminus: Transcription elongation factor GreA (158 aa).

Positions 3-75 (TEKTYPMTQE…TQLENMIRNA (73 aa)) form a coiled coil.

Belongs to the GreA/GreB family.

Its function is as follows. Necessary for efficient RNA polymerase transcription elongation past template-encoded arresting sites. The arresting sites in DNA have the property of trapping a certain fraction of elongating RNA polymerases that pass through, resulting in locked ternary complexes. Cleavage of the nascent transcript by cleavage factors such as GreA or GreB allows the resumption of elongation from the new 3'terminus. GreA releases sequences of 2 to 3 nucleotides. This Bacillus cytotoxicus (strain DSM 22905 / CIP 110041 / 391-98 / NVH 391-98) protein is Transcription elongation factor GreA.